The sequence spans 238 residues: Lactate utilization protein A (238 aa).

The protein belongs to the LutA/YkgE family.

Functionally, is involved in L-lactate degradation and allows cells to grow with lactate as the sole carbon source. The sequence is that of Lactate utilization protein A from Geobacillus sp. (strain WCH70).